The chain runs to 416 residues: S-adenosylmethionine synthase (416 aa).

H14 contributes to the ATP binding site. D16 provides a ligand contact to Mg(2+). E42 is a binding site for K(+). L-methionine contacts are provided by E55 and Q98. A flexible loop region spans residues 98–108 (QSADINQGVDR). Residues 164–166 (DAK), 240–241 (KF), D249, 255–256 (RK), A272, and K276 contribute to the ATP site. Residue D249 coordinates L-methionine. An L-methionine-binding site is contributed by K280.

This sequence belongs to the AdoMet synthase family. As to quaternary structure, homotetramer; dimer of dimers. The cofactor is Mg(2+). K(+) serves as cofactor.

It is found in the cytoplasm. The enzyme catalyses L-methionine + ATP + H2O = S-adenosyl-L-methionine + phosphate + diphosphate. It functions in the pathway amino-acid biosynthesis; S-adenosyl-L-methionine biosynthesis; S-adenosyl-L-methionine from L-methionine: step 1/1. Its function is as follows. Catalyzes the formation of S-adenosylmethionine (AdoMet) from methionine and ATP. The overall synthetic reaction is composed of two sequential steps, AdoMet formation and the subsequent tripolyphosphate hydrolysis which occurs prior to release of AdoMet from the enzyme. This is S-adenosylmethionine synthase from Flavobacterium psychrophilum (strain ATCC 49511 / DSM 21280 / CIP 103535 / JIP02/86).